The sequence spans 498 residues: Glycerol kinase (498 aa).

Residue Thr12 coordinates ADP. ATP is bound by residues Thr12, Thr13, and Ser14. Thr12 contributes to the sn-glycerol 3-phosphate binding site. An ADP-binding site is contributed by Arg16. Sn-glycerol 3-phosphate-binding residues include Arg82, Glu83, Tyr135, and Asp245. Glycerol is bound by residues Arg82, Glu83, Tyr135, Asp245, and Gln246. Residues Thr267 and Gly310 each contribute to the ADP site. ATP is bound by residues Thr267, Gly310, Gln314, and Gly411. Residues Gly411 and Asn415 each contribute to the ADP site.

This sequence belongs to the FGGY kinase family. Homotetramer and homodimer (in equilibrium).

It catalyses the reaction glycerol + ATP = sn-glycerol 3-phosphate + ADP + H(+). It functions in the pathway polyol metabolism; glycerol degradation via glycerol kinase pathway; sn-glycerol 3-phosphate from glycerol: step 1/1. Activated by phosphorylation and inhibited by fructose 1,6-bisphosphate (FBP). Its function is as follows. Key enzyme in the regulation of glycerol uptake and metabolism. Catalyzes the phosphorylation of glycerol to yield sn-glycerol 3-phosphate. The polypeptide is Glycerol kinase (Clostridium botulinum (strain Eklund 17B / Type B)).